The following is a 198-amino-acid chain: Recombination protein RecR (198 aa).

A C4-type zinc finger spans residues 58-73; the sequence is CLNCGNVGTSDICDIC. A Toprim domain is found at 81–175; that stretch reads GELCVVEDVA…RLTSLAQGVP (95 aa).

This sequence belongs to the RecR family.

Functionally, may play a role in DNA repair. It seems to be involved in an RecBC-independent recombinational process of DNA repair. It may act with RecF and RecO. The chain is Recombination protein RecR from Ruegeria pomeroyi (strain ATCC 700808 / DSM 15171 / DSS-3) (Silicibacter pomeroyi).